The primary structure comprises 700 residues: MSRTTSSNTPTLPQAVQERGSLRTLEKGESQFIGSSSGIYFVNTVRRAFINANSRLSSRLLDTAHPTPEECIVADGEDEQQRPDVDASLLPSSFSYGHGIPTGLGRPPQPDVAKQLFMTYFQTWHRFFPFLHGPTILRDMEDLYSSLDENSRASEPIPPRVPTTLPKVVILQCIFNLASLHNSSQLPVASEIQKPTDLLSYLPGLAVKGDLVSIQALFAAGLLLVARMSLRAASVVSGLLSRAVFLAGLHRCPCRYGKLTADECDIRKRLFWCIYVFDRYLSQALGHPLGIQDSDVDVCPLDGPELHHPLLYPTVPSSYSGVASPFSGLSAMSVDATITGRQSEAGLGRATSEDESSQKHNRHSSLSFQVQYSRLLGRALELFHKSLHIRSIDSGSILSLQTDINALWNALPSSLQEFDPSSCDTTDRNQSQVFNESAHFILLHSQLVLLIHRPRLSLEPSTPEFQSAIQICINEAREIIKITSKQINAGYALFWPAYLSVTWMAGIVLAFACQLRLYSAEKGKREIGMCLDVLLHMSERWKLAKNCHAVLSDLAEAIQEMEHTAKRPAFEVSDSTFDSVHSGRDSVSSAMNYQSDSRKRARLDTESNPRSSQRNDGSGQPLNQIPADIVNVSMGEPLGSSFEPLDATDAAIEDDIQYFGDPGRLSSWESGMPDLLAGITWESLLGGINEDDPSWDSAFF.

Disordered stretches follow at residues 343–364 (SEAG…NRHS) and 577–624 (FDSV…PLNQ). Over residues 577–595 (FDSVHSGRDSVSSAMNYQS) the composition is skewed to polar residues. A compositionally biased stretch (basic and acidic residues) spans 596–607 (DSRKRARLDTES). A compositionally biased stretch (polar residues) spans 608-623 (NPRSSQRNDGSGQPLN).

The protein localises to the nucleus. Probable transcrition factor; part of the gene cluster that mediates the biosynthesis of the mycotoxin fusaproliferin (FUP) that belongs to the class of bicyclic sesterterpenoids. This is Probable transcription factor FUP6 from Fusarium proliferatum (strain ET1) (Orchid endophyte fungus).